A 264-amino-acid polypeptide reads, in one-letter code: Thymidylate synthase (264 aa).

Residue Arg21 participates in dUMP binding. His51 serves as a coordination point for (6R)-5,10-methylene-5,6,7,8-tetrahydrofolate. 126–127 lines the dUMP pocket; that stretch reads RR. Cys146 serves as the catalytic Nucleophile. DUMP is bound by residues 166-169, Asn177, and 207-209; these read RSAD and HLY. Asp169 provides a ligand contact to (6R)-5,10-methylene-5,6,7,8-tetrahydrofolate. Ala263 is a binding site for (6R)-5,10-methylene-5,6,7,8-tetrahydrofolate.

The protein belongs to the thymidylate synthase family. Bacterial-type ThyA subfamily. In terms of assembly, homodimer.

The protein resides in the cytoplasm. The enzyme catalyses dUMP + (6R)-5,10-methylene-5,6,7,8-tetrahydrofolate = 7,8-dihydrofolate + dTMP. It functions in the pathway pyrimidine metabolism; dTTP biosynthesis. Its function is as follows. Catalyzes the reductive methylation of 2'-deoxyuridine-5'-monophosphate (dUMP) to 2'-deoxythymidine-5'-monophosphate (dTMP) while utilizing 5,10-methylenetetrahydrofolate (mTHF) as the methyl donor and reductant in the reaction, yielding dihydrofolate (DHF) as a by-product. This enzymatic reaction provides an intracellular de novo source of dTMP, an essential precursor for DNA biosynthesis. The polypeptide is Thymidylate synthase (Aromatoleum aromaticum (strain DSM 19018 / LMG 30748 / EbN1) (Azoarcus sp. (strain EbN1))).